The chain runs to 168 residues: Myelin basic protein (168 aa).

Ala-1 carries the N-acetylalanine modification. Phosphoserine occurs at positions 7 and 12. Tyr-14 is subject to Phosphotyrosine. At Thr-17 the chain carries Phosphothreonine. At Ser-19 the chain carries Phosphoserine. Thr-20 is modified (phosphothreonine). Citrulline is present on residues Arg-25 and Arg-31. Thr-35 carries the post-translational modification Phosphothreonine. Ser-40 carries the phosphoserine modification. The segment at 42–84 (GRFFSSDRGAPKRGSGKDHAARTTHYGSLPQKSGHRPQDENPV) is disordered. Omega-N-methylarginine occurs at positions 43 and 49. Residues 45–86 (FSSDRGAPKRGSGKDHAARTTHYGSLPQKSGHRPQDENPVVH) are induces experimental autoimmune encephalomyelitis (EAE). A Phosphoserine modification is found at Ser-56. The residue at position 65 (Thr-65) is a Phosphothreonine. Position 67 is a phosphotyrosine (Tyr-67). Ser-74 carries the phosphoserine modification. Phosphothreonine occurs at positions 93 and 96. At Gln-101 the chain carries Deamidated glutamine; partial. Arg-105 is modified (omega-N-methylarginine; alternate). Arg-105 carries the symmetric dimethylarginine; alternate modification. Ser-113 is subject to Phosphoserine. Lys-120 bears the N6-acetyllysine mark. Position 128 is a citrulline (Arg-128). Gln-145 carries the deamidated glutamine modification. At Arg-157 the chain carries Citrulline. Ser-159 is subject to Phosphoserine. Ser-163 bears the Phosphoserine; by UHMK1 mark. At Arg-168 the chain carries Citrulline.

The protein belongs to the myelin basic protein family. Homodimer. As in other animals, several charge isomers may be produced as a result of optional post-translational modifications, such as phosphorylation of serine or threonine residues, deamidation of glutamine or asparagine residues, citrullination and methylation of arginine residues. In terms of processing, phosphorylated by TAOK2, VRK2, MAPK11, MAPK12, MAPK14 and MINK1. Post-translationally, proteolytically cleaved in B cell lysosomes by cathepsin CTSG which degrades the major immunogenic MBP epitope and prevents the activation of MBP-specific autoreactive T cells. Found in both the central and the peripheral nervous system.

Its subcellular location is the myelin membrane. Functionally, is, with PLP, the most abundant protein component of the myelin membrane in the CNS. Has a role in both the formation and stabilization of this compact multilayer arrangement of bilayers. Each splice variant and charge isomer may have a specialized function in the assembly of an optimized, biochemically functional myelin membrane. This is Myelin basic protein (MBP) from Oryctolagus cuniculus (Rabbit).